The primary structure comprises 398 residues: MQSSSLNNYNSNKNFIIMLIILFLMEFARGMYILSYLALLPTATSIAVGITSIAISIHFIADATTNFVIGFLLKRLGTKLVLTLGFLLAFASLFLVIWFPTSPFVLIASAILLGIAVSPIWVIMLASVDENNRGKQMGYVYFSWLLGLLVGMVGMNVIFKFHPTQFAFLMSLVVLIAWILYYFVKVRLTNYNTRPVKQQLGQIVDVTKRHMILFPGILLQGASITALVPILPTYATKVVGVSTLEYTMAIVFGGIGCAISMLFLSKIIDKHGTLFMYWVIFGGFVLYTLMIFALSLITNITIVWVLAVFIGLMYGILLPAWNTFMASHIHSDEQEETWGVFNSVQGFGSMIGPLVGGLITEFTKSVNNTFYFSALVFLFLAIFYGIYFVKVNNKTKTS.

Helical transmembrane passes span 15–40 (FIIMLIILFLMEFARGMYILSYLALL), 46–73 (IAVGITSIAISIHFIADATTNFVIGFLL), 80–99 (LVLTLGFLLAFASLFLVIWF), 105–126 (VLIASAILLGIAVSPIWVIMLA), 138–159 (GYVYFSWLLGLLVGMVGMNVIF), 165–184 (QFAFLMSLVVLIAWILYYFV), 212–234 (ILFPGILLQGASITALVPILPTY), 246–264 (YTMAIVFGGIGCAISMLFL), 276–297 (MYWVIFGGFVLYTLMIFALSLI), 303–326 (VWVLAVFIGLMYGILLPAWNTFMA), 338–359 (WGVFNSVQGFGSMIGPLVGGLI), and 371–389 (YFSALVFLFLAIFYGIYFV).

The protein belongs to the major facilitator superfamily. LtaA family.

Its subcellular location is the cell membrane. Its pathway is cell wall biogenesis; lipoteichoic acid biosynthesis. Its function is as follows. Proton-coupled antiporter flippase that catalyzes the translocation, from the inner to the outer leaflet of the cell membrane, of the lipid-linked disaccharide (anchor-LLD) that anchors lipoteichoic acids (LTA) to the cell membrane. The sequence is that of Proton-coupled antiporter flippase LtaA (ltaA) from Staphylococcus saprophyticus subsp. saprophyticus (strain ATCC 15305 / DSM 20229 / NCIMB 8711 / NCTC 7292 / S-41).